The chain runs to 1360 residues: MSRQSTLYSFFPKSPALSDANKASARASREGGRAAAAPGASPSPGGDAAWSEAGPGPRPLARSASPPKAKNLNGGLRRSVAPAAPTSCDFSPGDLVWAKMEGYPWWPCLVYNHPFDGTFIREKGKSVRVHVQFFDDSPTRGWVSKRLLKPYTGSKSKEAQKGGHFYSAKPEILRAMQRADEALNKDKIKRLELAVCDEPSEPEEEEEMEVGTTYVTDKSEEDNEIESEEEVQPKTQGSRRSSRQIKKRRVISDSESDIGGSDVEFKPDTKEEGSSDEISSGVGDSESEGLNSPVKVARKRKRMVTGNGSLKRKSSRKETPSATKQATSISSETKNTLRAFSAPQNSESQAHVSGGGDDSSRPTVWYHETLEWLKEEKRRDEHRRRPDHPDFDASTLYVPEDFLNSCTPGMRKWWQIKSQNFDLVICYKVGKFYELYHMDALIGVSELGLVFMKGNWAHSGFPEIAFGRYSDSLVQKGYKVARVEQTETPEMMEARCRKMAHISKYDRVVRREICRIITKGTQTYSVLEGDPSENYSKYLLSLKEKEEDSSGHTRAYGVCFVDTSLGKFFIGQFSDDRHCSRFRTLVAHYPPVQVLFEKGNLSKETKTILKSSLSCSLQEGLIPGSQFWDASKTLRTLLEEEYFREKLSDGIGVMLPQVLKGMTSESDSIGLTPGEKSELALSALGGCVFYLKKCLIDQELLSMANFEEYIPLDSDTVSTTRSGAIFTKAYQRMVLDAVTLNNLEIFLNGTNGSTEGTLLERVDTCHTPFGKRLLKQWLCAPLCNHYAINDRLDAIEDLMVVPDKISEVVELLKKLPDLERLLSKIHNVGSPLKSQNHPDSRAIMYEETTYSKKKIIDFLSALEGFKVMCKIIGIMEEVADGFKSKILKQVISLQTKNPEGRFPDLTVELNRWDTAFDHEKARKTGLITPKAGFDSDYDQALADIRENEQSLLEYLEKQRNRIGCRTIVYWGIGRNRYQLEIPENFTTRNLPEEYELKSTKKGCKRYWTKTIEKKLANLINAEERRDVSLKDCMRRLFYNFDKNYKDWQSAVECIAVLDVLLCLANYSRGGDGPMCRPVILLPEDTPPFLELKGSRHPCITKTFFGDDFIPNDILIGCEEEEQENGKAYCVLVTGPNMGGKSTLMRQAGLLAVMAQMGCYVPAEVCRLTPIDRVFTRLGASDRIMSGESTFFVELSETASILMHATAHSLVLVDELGRGTATFDGTAIANAVVKELAETIKCRTLFSTHYHSLVEDYSQNVAVRLGHMACMVENECEDPSQETITFLYKFIKGACPKSYGFNAARLANLPEEVIQKGHRKAREFEKMNQSLRLFREVCLASERSTVDAEAVHKLLTLIKEL.

Positions 1–84 are disordered; the sequence is MSRQSTLYSF…GLRRSVAPAA (84 aa). Residues Ser-14, Ser-41, and Ser-43 each carry the phosphoserine modification. Residues 33-51 show a composition bias toward low complexity; the sequence is RAAAAPGASPSPGGDAAWS. Lys-70 carries the post-translational modification N6-acetyllysine. Phosphoserine is present on residues Ser-79, Ser-91, Ser-137, Ser-200, Ser-219, and Ser-227. In terms of domain architecture, PWWP spans 92-154; sequence PGDLVWAKME…KRLLKPYTGS (63 aa). Residues 195–362 are disordered; the sequence is VCDEPSEPEE…SGGGDDSSRP (168 aa). Composition is skewed to acidic residues over residues 198–209 and 219–230; these read EPSEPEEEEEME and SEEDNEIESEEE. Positions 240–249 are enriched in basic residues; the sequence is RSSRQIKKRR. 4 positions are modified to phosphoserine: Ser-252, Ser-254, Ser-256, and Ser-261. The segment covering 263 to 273 has biased composition (basic and acidic residues); the sequence is VEFKPDTKEEG. Position 269 is a phosphothreonine (Thr-269). Phosphoserine is present on residues Ser-274, Ser-275, Ser-279, Ser-280, and Ser-309. The span at 320 to 351 shows a compositional bias: polar residues; that stretch reads PSATKQATSISSETKNTLRAFSAPQNSESQAH. Thr-488 is modified (phosphothreonine). Lys-504 bears the N6-acetyllysine mark. Ser-830 and Ser-935 each carry phosphoserine. Thr-1010 is modified (phosphothreonine). 1134 to 1141 contributes to the ATP binding site; it reads GPNMGGKS.

Belongs to the DNA mismatch repair MutS family. As to quaternary structure, component of the DNA mismatch repair (MMR) complex composed at least of MSH2, MSH3, MSH6, PMS1 and MLH1. Heterodimer consisting of MSH2-MSH6 (MutS alpha). Forms a ternary complex with MutL alpha (MLH1-PMS1). Interacts with MCM9. Part of the BRCA1-associated genome surveillance complex (BASC), which contains BRCA1, MSH2, MSH6, MLH1, ATM, BLM, PMS2 and the RAD50-MRE11-NBS1 protein complex. This association could be a dynamic process changing throughout the cell cycle and within subnuclear domains. (Microbial infection) Interacts with herpes simplex virus 1 protein UL12. The N-terminus is blocked. In terms of processing, phosphorylated by PRKCZ, which may prevent MutS alpha degradation by the ubiquitin-proteasome pathway.

The protein resides in the nucleus. The protein localises to the chromosome. Functionally, component of the post-replicative DNA mismatch repair system (MMR). Heterodimerizes with MSH2 to form MutS alpha, which binds to DNA mismatches thereby initiating DNA repair. When bound, MutS alpha bends the DNA helix and shields approximately 20 base pairs, and recognizes single base mismatches and dinucleotide insertion-deletion loops (IDL) in the DNA. After mismatch binding, forms a ternary complex with the MutL alpha heterodimer, which is thought to be responsible for directing the downstream MMR events, including strand discrimination, excision, and resynthesis. ATP binding and hydrolysis play a pivotal role in mismatch repair functions. The ATPase activity associated with MutS alpha regulates binding similar to a molecular switch: mismatched DNA provokes ADP--&gt;ATP exchange, resulting in a discernible conformational transition that converts MutS alpha into a sliding clamp capable of hydrolysis-independent diffusion along the DNA backbone. This transition is crucial for mismatch repair. MutS alpha may also play a role in DNA homologous recombination repair. Recruited on chromatin in G1 and early S phase via its PWWP domain that specifically binds trimethylated 'Lys-36' of histone H3 (H3K36me3): early recruitment to chromatin to be replicated allowing a quick identification of mismatch repair to initiate the DNA mismatch repair reaction. This chain is DNA mismatch repair protein Msh6, found in Homo sapiens (Human).